The sequence spans 102 residues: Monothiol glutaredoxin-S5 (102 aa).

Positions 1 to 101 (MENLQKMISE…PMLKRAGALW (101 aa)) constitute a Glutaredoxin domain. Cys-21 lines the [2Fe-2S] cluster pocket. The short motif at 99-102 (ALWL) is the Responsive for interaction with TGA factors element.

It belongs to the glutaredoxin family. CC-type subfamily.

It is found in the cytoplasm. It localises to the nucleus. May only reduce GSH-thiol disulfides, but not protein disulfides. The polypeptide is Monothiol glutaredoxin-S5 (GRXS5) (Arabidopsis thaliana (Mouse-ear cress)).